We begin with the raw amino-acid sequence, 344 residues long: Phosphate acyltransferase (344 aa).

It belongs to the PlsX family. Homodimer. Probably interacts with PlsY.

It localises to the cytoplasm. The enzyme catalyses a fatty acyl-[ACP] + phosphate = an acyl phosphate + holo-[ACP]. Its pathway is lipid metabolism; phospholipid metabolism. Its function is as follows. Catalyzes the reversible formation of acyl-phosphate (acyl-PO(4)) from acyl-[acyl-carrier-protein] (acyl-ACP). This enzyme utilizes acyl-ACP as fatty acyl donor, but not acyl-CoA. The chain is Phosphate acyltransferase from Sodalis glossinidius (strain morsitans).